A 162-amino-acid chain; its full sequence is Ribosome maturation factor RimM (162 aa).

Residues 86–160 (EGRYYYFALI…SIHVDPIPGL (75 aa)) form the PRC barrel domain.

This sequence belongs to the RimM family. As to quaternary structure, binds ribosomal protein uS19.

It is found in the cytoplasm. Its function is as follows. An accessory protein needed during the final step in the assembly of 30S ribosomal subunit, possibly for assembly of the head region. Essential for efficient processing of 16S rRNA. May be needed both before and after RbfA during the maturation of 16S rRNA. It has affinity for free ribosomal 30S subunits but not for 70S ribosomes. In Thermus thermophilus (strain ATCC 27634 / DSM 579 / HB8), this protein is Ribosome maturation factor RimM.